A 1394-amino-acid polypeptide reads, in one-letter code: Coiled-coil domain-containing protein 7 (1394 aa).

A coiled-coil region spans residues 308 to 340 (LLDAEYKQIQRDFELLSEEKLVLENELQKLKDT). The interval 345–375 (STNNRTKKAAKTVKKKDKGKSEDSEKKMSSE) is disordered. The span at 349-362 (RTKKAAKTVKKKDK) shows a compositional bias: basic residues. A compositionally biased stretch (basic and acidic residues) spans 363–375 (GKSEDSEKKMSSE). The stretch at 383–421 (LDQVQKVARLEIENKVLQEQLKQALQEAEKAKHQLNYFL) forms a coiled coil. Disordered regions lie at residues 431–617 (EGKT…EVPD), 634–806 (EQMK…LEHQ), and 819–842 (NEKL…PMLK). Polar residues predominate over residues 437-446 (TMRVGNSQTE). The span at 447 to 462 (VKGEDSKTIPLEKETG) shows a compositional bias: basic and acidic residues. The span at 464 to 473 (SLVSDSGGQK) shows a compositional bias: polar residues. The segment covering 491 to 500 (LIEKSSEKKR) has biased composition (basic and acidic residues). Polar residues-rich tracts occupy residues 503-513 (PAISDLSQILK), 521-538 (LESS…NKSP), and 546-571 (LTTV…NETV). The segment covering 583–600 (ESKKADVSEEQLQKKTEE) has biased composition (basic and acidic residues). Polar residues predominate over residues 663–679 (SRSQSETKNLEATGNES). The span at 695 to 707 (QDTKSKTEVEVKK) shows a compositional bias: basic and acidic residues. A compositionally biased stretch (polar residues) spans 711–721 (FQDNQLNTHNE). The segment covering 722 to 736 (VPNERLIVEHQESMS) has biased composition (basic and acidic residues). Positions 780–790 (KEQSTLKGQRI) are enriched in polar residues. Basic and acidic residues-rich tracts occupy residues 791-806 (TTHE…LEHQ) and 830-842 (THGE…PMLK).

Functionally, may play a role in tumorigenesis. The protein is Coiled-coil domain-containing protein 7 (CCDC7) of Macaca fascicularis (Crab-eating macaque).